The following is a 128-amino-acid chain: Large ribosomal subunit protein uL22 (128 aa).

It belongs to the universal ribosomal protein uL22 family. In terms of assembly, part of the 50S ribosomal subunit.

This protein binds specifically to 23S rRNA; its binding is stimulated by other ribosomal proteins, e.g. L4, L17, and L20. It is important during the early stages of 50S assembly. It makes multiple contacts with different domains of the 23S rRNA in the assembled 50S subunit and ribosome. In terms of biological role, the globular domain of the protein is located near the polypeptide exit tunnel on the outside of the subunit, while an extended beta-hairpin is found that lines the wall of the exit tunnel in the center of the 70S ribosome. The polypeptide is Large ribosomal subunit protein uL22 (Prochlorococcus marinus subsp. pastoris (strain CCMP1986 / NIES-2087 / MED4)).